A 72-amino-acid chain; its full sequence is Translation initiation factor IF-1 (72 aa).

The region spanning methionine 1–lysine 72 is the S1-like domain.

It belongs to the IF-1 family. In terms of assembly, component of the 30S ribosomal translation pre-initiation complex which assembles on the 30S ribosome in the order IF-2 and IF-3, IF-1 and N-formylmethionyl-tRNA(fMet); mRNA recruitment can occur at any time during PIC assembly.

It localises to the cytoplasm. Functionally, one of the essential components for the initiation of protein synthesis. Stabilizes the binding of IF-2 and IF-3 on the 30S subunit to which N-formylmethionyl-tRNA(fMet) subsequently binds. Helps modulate mRNA selection, yielding the 30S pre-initiation complex (PIC). Upon addition of the 50S ribosomal subunit IF-1, IF-2 and IF-3 are released leaving the mature 70S translation initiation complex. The chain is Translation initiation factor IF-1 from Campylobacter fetus subsp. fetus (strain 82-40).